Here is a 170-residue protein sequence, read N- to C-terminus: Protein AIG2 A (170 aa).

15 to 20 is a substrate binding site; the sequence is YGSFQE. The active-site Proton acceptor is E83. Over residues 147-162 the composition is skewed to basic and acidic residues; sequence KNPNGRSREEFEKFVQ. The segment at 147 to 170 is disordered; sequence KNPNGRSREEFEKFVQDDSSPASA.

The protein belongs to the gamma-glutamylcyclotransferase family. Ubiquitous.

Functionally, putative gamma-glutamylcyclotransferase. This chain is Protein AIG2 A, found in Arabidopsis thaliana (Mouse-ear cress).